We begin with the raw amino-acid sequence, 347 residues long: Phosphate acyltransferase (347 aa).

This sequence belongs to the PlsX family. As to quaternary structure, homodimer. Probably interacts with PlsY.

The protein resides in the cytoplasm. The enzyme catalyses a fatty acyl-[ACP] + phosphate = an acyl phosphate + holo-[ACP]. It participates in lipid metabolism; phospholipid metabolism. In terms of biological role, catalyzes the reversible formation of acyl-phosphate (acyl-PO(4)) from acyl-[acyl-carrier-protein] (acyl-ACP). This enzyme utilizes acyl-ACP as fatty acyl donor, but not acyl-CoA. This Lawsonia intracellularis (strain PHE/MN1-00) protein is Phosphate acyltransferase.